Reading from the N-terminus, the 348-residue chain is Rhodopsin (348 aa).

Met-1 is subject to N-acetylmethionine. Residues 1 to 36 (MNGTEGPNFYVPFSNITGVVRSPFEQPQYYLAEPWQ) are Extracellular-facing. N-linked (GlcNAc...) asparagine glycosylation is found at Asn-2 and Asn-15. A helical transmembrane segment spans residues 37–61 (FSMLAAYMFLLIVLGFPINFLTLYV). Residues 62–73 (TVQHKKLRTPLN) are Cytoplasmic-facing. The helical transmembrane segment at 74–96 (YILLNLAVADLFMVFGGFTTTLY) threads the bilayer. Residues 97 to 110 (TSLHGYFVFGPTGC) lie on the Extracellular side of the membrane. Residues Cys-110 and Cys-187 are joined by a disulfide bond. Residues 111 to 133 (NLEGFFATLGGEIGLWSLVVLAI) traverse the membrane as a helical segment. The short motif at 134–136 (ERY) is the 'Ionic lock' involved in activated form stabilization element. Residues 134–152 (ERYVVVCKPMSNFRFGENH) are Cytoplasmic-facing. A helical transmembrane segment spans residues 153-173 (AIMGVAFTWVMALACAAPPLV). Over 174–202 (GWSRYIPEGMQCSCGIDYYTLKPEVNNES) the chain is Extracellular. Glu-201 contributes to the Zn(2+) binding site. A helical transmembrane segment spans residues 203 to 224 (FVIYMFVVHFTIPMIVIFFCYG). At 225 to 252 (QLVFTVKEAAAQQQESATTQKAEKEVTR) the chain is on the cytoplasmic side. The chain crosses the membrane as a helical span at residues 253-274 (MVIIMVIFFLICWLPYASVAMY). Topologically, residues 275–286 (IFTHQGSNFGPI) are extracellular. Residue Gln-279 participates in Zn(2+) binding. The chain crosses the membrane as a helical span at residues 287–308 (FMTLPAFFAKTASIYNPIIYIM). Lys-296 carries the post-translational modification N6-(retinylidene)lysine. Over 309–348 (MNKQFRNCMLTSLCCGKNPLGDDEASATASKTETSQVAPA) the chain is Cytoplasmic. 2 S-palmitoyl cysteine lipidation sites follow: Cys-322 and Cys-323. Residues 330–348 (DDEASATASKTETSQVAPA) are interaction with SAG. Ser-334 carries the phosphoserine modification. Thr-336 carries the phosphothreonine modification. Ser-338 is subject to Phosphoserine. Residues Thr-340 and Thr-342 each carry the phosphothreonine modification. Ser-343 bears the Phosphoserine mark.

This sequence belongs to the G-protein coupled receptor 1 family. Opsin subfamily. Homodimer. May form a complex composed of RHO, GRK1 and RCVRN in a Ca(2+)-dependent manner; RCVRN prevents the interaction between GRK1 and RHO. Interacts with GRK1. Interacts (phosphorylated form) with SAG. Interacts with GNAT1. Interacts with GNAT3. SAG and G-proteins compete for a common binding site. Interacts with PRCD; the interaction promotes PRCD stability. Forms a complex with ASAP1 and ARF4. Forms a complex with ASAP1, RAB11A, Rabin8/RAB3IP, ARF4 and RAB11FIP3; the complex regulates Golgi-to-cilia rhodopsin/RHO transport in photoreceptors. Phosphorylated on some or all of the serine and threonine residues present in the C-terminal region. In terms of processing, contains one covalently linked retinal chromophore. Upon light absorption, the covalently bound 11-cis-retinal is converted to all-trans-retinal. After hydrolysis of the Schiff base and release of the covalently bound all-trans-retinal, active rhodopsin is regenerated by binding of a fresh molecule of 11-cis-retinal.

Its subcellular location is the membrane. It is found in the cell projection. The protein resides in the cilium. It localises to the photoreceptor outer segment. Functionally, photoreceptor required for image-forming vision at low light intensity. Required for photoreceptor cell viability after birth. Light-induced isomerization of 11-cis to all-trans retinal triggers a conformational change that activates signaling via G-proteins. Subsequent receptor phosphorylation mediates displacement of the bound G-protein alpha subunit by the arrestin SAG and terminates signaling. This is Rhodopsin (Rho) from Rattus norvegicus (Rat).